The following is a 242-amino-acid chain: Ras-like protein family member 11A (242 aa).

The small GTPase-like stretch occupies residues 17–241 (ESSSDYLLPK…SSKAKASSAL (225 aa)). GTP-binding positions include 34 to 41 (GAGCVGKS), 81 to 88 (DTPGGIQA), and 147 to 150 (NKGD).

This sequence belongs to the small GTPase superfamily. Ras family. Interacts with UBF/UBTF.

It localises to the nucleus. Its subcellular location is the nucleolus. The catalysed reaction is GTP + H2O = GDP + phosphate + H(+). Its function is as follows. Regulator of rDNA transcription. Acts in cooperation UBF/UBTF and positively regulates RNA polymerase I transcription. This is Ras-like protein family member 11A from Mus musculus (Mouse).